The following is a 485-amino-acid chain: Zinc finger protein 639 (485 aa).

Residues 1-14 (MNEYPKKRKRKTLH) are compositionally biased toward basic residues. Disordered stretches follow at residues 1-23 (MNEY…DSSG) and 54-80 (DNKD…ARNR). Residue Ser60 is modified to Phosphoserine. A Glycyl lysine isopeptide (Lys-Gly) (interchain with G-Cter in SUMO2) cross-link involves residue Lys76. Residue Ser88 is modified to Phosphoserine. Positions 115–136 (ASPESVHQHTQEESPIEVHTSE) are disordered. Residues Lys177, Lys181, and Lys226 each participate in a glycyl lysine isopeptide (Lys-Gly) (interchain with G-Cter in SUMO2) cross-link. C2H2-type zinc fingers lie at residues 204–227 (YKCE…ILKH), 233–255 (NVCR…AKLH), 260–283 (YICK…ADTH), 289–311 (YWCE…FQEH), 374–397 (FVCQ…AIEH), 403–425 (HVCD…LNSH), 431–454 (YLCQ…DFKH), and 460–482 (HKCS…LQVH). Residues 371-455 (KNFFVCQVCG…LKIHLDFKHS (85 aa)) form an interaction with CTNNA2 region.

This sequence belongs to the krueppel C2H2-type zinc-finger protein family. In terms of assembly, interacts with CTNNA2.

It is found in the nucleus. Its function is as follows. Binds DNA and may function as a transcriptional repressor. The polypeptide is Zinc finger protein 639 (Znf639) (Mus musculus (Mouse)).